We begin with the raw amino-acid sequence, 173 residues long: ATP synthase subunit b 1 (173 aa).

A helical membrane pass occupies residues 15–37 (TFWVTVAVLIFLAFFGRKIVGAI).

The protein belongs to the ATPase B chain family. In terms of assembly, F-type ATPases have 2 components, F(1) - the catalytic core - and F(0) - the membrane proton channel. F(1) has five subunits: alpha(3), beta(3), gamma(1), delta(1), epsilon(1). F(0) has three main subunits: a(1), b(2) and c(10-14). The alpha and beta chains form an alternating ring which encloses part of the gamma chain. F(1) is attached to F(0) by a central stalk formed by the gamma and epsilon chains, while a peripheral stalk is formed by the delta and b chains.

It localises to the cell inner membrane. F(1)F(0) ATP synthase produces ATP from ADP in the presence of a proton or sodium gradient. F-type ATPases consist of two structural domains, F(1) containing the extramembraneous catalytic core and F(0) containing the membrane proton channel, linked together by a central stalk and a peripheral stalk. During catalysis, ATP synthesis in the catalytic domain of F(1) is coupled via a rotary mechanism of the central stalk subunits to proton translocation. In terms of biological role, component of the F(0) channel, it forms part of the peripheral stalk, linking F(1) to F(0). In Acidiphilium cryptum (strain JF-5), this protein is ATP synthase subunit b 1.